A 556-amino-acid polypeptide reads, in one-letter code: Testis-specific protein 10-interacting protein (556 aa).

Over residues 1–20 (MGQETNMLNAHQQLVRTSSG) the composition is skewed to polar residues. Disordered regions lie at residues 1–102 (MGQE…SPRK) and 180–320 (CTSI…GPWD). The segment covering 75–85 (KDRRLRGRNKK) has biased composition (basic residues). 2 stretches are compositionally biased toward acidic residues: residues 213–225 (EPEE…LGAE) and 246–260 (LEEE…EAED). Residues 266–278 (PWRRRTSSRRKGR) show a composition bias toward basic residues. Basic and acidic residues predominate over residues 304 to 320 (EPQRRKPRAKELEGPWD). Residues 387–463 (LRAWELQQRE…ELQGIQHRVQ (77 aa)) adopt a coiled-coil conformation. The interval 503–556 (AGKRDMEGAPRRHRSHRSVGARMEPSSQSPPKMEPTGSQADQHFAPNPDQELSP) is disordered. Residues 527–543 (PSSQSPPKMEPTGSQAD) show a composition bias toward polar residues.

This chain is Testis-specific protein 10-interacting protein (TSGA10IP), found in Bos taurus (Bovine).